A 708-amino-acid polypeptide reads, in one-letter code: Fatty acid oxidation complex subunit alpha (708 aa).

Positions 1–190 are enoyl-CoA hydratase; it reads MDMEKTFNLT…KMGLVDDAVP (190 aa). The 3-hydroxyacyl-CoA dehydrogenase stretch occupies residues 310–708; it reads QKVNKVMVLG…MAEEGTRFFS (399 aa).

This sequence in the N-terminal section; belongs to the enoyl-CoA hydratase/isomerase family. The protein in the central section; belongs to the 3-hydroxyacyl-CoA dehydrogenase family. Heterotetramer of two alpha chains (FadJ) and two beta chains (FadI).

It localises to the cytoplasm. The enzyme catalyses a (3S)-3-hydroxyacyl-CoA = a (2E)-enoyl-CoA + H2O. The catalysed reaction is a 4-saturated-(3S)-3-hydroxyacyl-CoA = a (3E)-enoyl-CoA + H2O. It catalyses the reaction a (3S)-3-hydroxyacyl-CoA + NAD(+) = a 3-oxoacyl-CoA + NADH + H(+). It carries out the reaction (3S)-3-hydroxybutanoyl-CoA = (3R)-3-hydroxybutanoyl-CoA. Its pathway is lipid metabolism; fatty acid beta-oxidation. Functionally, catalyzes the formation of a hydroxyacyl-CoA by addition of water on enoyl-CoA. Also exhibits 3-hydroxyacyl-CoA epimerase and 3-hydroxyacyl-CoA dehydrogenase activities. The polypeptide is Fatty acid oxidation complex subunit alpha (Shewanella halifaxensis (strain HAW-EB4)).